Consider the following 109-residue polypeptide: Acylphosphatase (109 aa).

The region spanning 22 to 109 (RLRARVEGVV…GEFSSFDVVY (88 aa)) is the Acylphosphatase-like domain. Residues arginine 37 and asparagine 55 contribute to the active site.

Belongs to the acylphosphatase family.

The catalysed reaction is an acyl phosphate + H2O = a carboxylate + phosphate + H(+). This chain is Acylphosphatase (acyP), found in Arthrobacter sp. (strain FB24).